The primary structure comprises 227 residues: MAYPYELGFQDASSPIMEELLHFHDHTLMIVFLISTLVLYLITIMLTTKLTHTSTMDAQEIETIWTILPAIILILIALPSLRILYMMDEINSPSLTVKTMGHQWYWSYEYTDYEELSFDSYMVPTMDLKPGELRLLEVDNRVVLPMEMPVRMLISSEDVLHSWAVPSLGLKTDAIPGRLNQATLMSSRPGLYYGQCSEICGSNHSFMPIVLEMVPLKDFEIWSSSML.

At 1–14 the chain is on the mitochondrial intermembrane side; sequence MAYPYELGFQDASS. Residues 15–45 traverse the membrane as a helical segment; that stretch reads PIMEELLHFHDHTLMIVFLISTLVLYLITIM. Topologically, residues 46 to 59 are mitochondrial matrix; sequence LTTKLTHTSTMDAQ. Residues 60–87 traverse the membrane as a helical segment; the sequence is EIETIWTILPAIILILIALPSLRILYMM. Over 88–227 the chain is Mitochondrial intermembrane; that stretch reads DEINSPSLTV…DFEIWSSSML (140 aa). The Cu cation site is built by His161, Cys196, Glu198, Cys200, His204, and Met207. Glu198 contacts Mg(2+).

It belongs to the cytochrome c oxidase subunit 2 family. In terms of assembly, component of the cytochrome c oxidase (complex IV, CIV), a multisubunit enzyme composed of 14 subunits. The complex is composed of a catalytic core of 3 subunits MT-CO1, MT-CO2 and MT-CO3, encoded in the mitochondrial DNA, and 11 supernumerary subunits COX4I, COX5A, COX5B, COX6A, COX6B, COX6C, COX7A, COX7B, COX7C, COX8 and NDUFA4, which are encoded in the nuclear genome. The complex exists as a monomer or a dimer and forms supercomplexes (SCs) in the inner mitochondrial membrane with NADH-ubiquinone oxidoreductase (complex I, CI) and ubiquinol-cytochrome c oxidoreductase (cytochrome b-c1 complex, complex III, CIII), resulting in different assemblies (supercomplex SCI(1)III(2)IV(1) and megacomplex MCI(2)III(2)IV(2)). Found in a complex with TMEM177, COA6, COX18, COX20, SCO1 and SCO2. Interacts with TMEM177 in a COX20-dependent manner. Interacts with COX20. Interacts with COX16. Cu cation is required as a cofactor.

The protein localises to the mitochondrion inner membrane. It catalyses the reaction 4 Fe(II)-[cytochrome c] + O2 + 8 H(+)(in) = 4 Fe(III)-[cytochrome c] + 2 H2O + 4 H(+)(out). Component of the cytochrome c oxidase, the last enzyme in the mitochondrial electron transport chain which drives oxidative phosphorylation. The respiratory chain contains 3 multisubunit complexes succinate dehydrogenase (complex II, CII), ubiquinol-cytochrome c oxidoreductase (cytochrome b-c1 complex, complex III, CIII) and cytochrome c oxidase (complex IV, CIV), that cooperate to transfer electrons derived from NADH and succinate to molecular oxygen, creating an electrochemical gradient over the inner membrane that drives transmembrane transport and the ATP synthase. Cytochrome c oxidase is the component of the respiratory chain that catalyzes the reduction of oxygen to water. Electrons originating from reduced cytochrome c in the intermembrane space (IMS) are transferred via the dinuclear copper A center (CU(A)) of subunit 2 and heme A of subunit 1 to the active site in subunit 1, a binuclear center (BNC) formed by heme A3 and copper B (CU(B)). The BNC reduces molecular oxygen to 2 water molecules using 4 electrons from cytochrome c in the IMS and 4 protons from the mitochondrial matrix. This Cavia aperea (Brazilian guinea pig) protein is Cytochrome c oxidase subunit 2 (MT-CO2).